A 361-amino-acid chain; its full sequence is Free fatty acid receptor 4 (361 aa).

Over 1-45 (MSPECARAAGDAPLRSLEQANRTRFPFFSDVKGDHRLVLAAVETT) the chain is Extracellular. N-linked (GlcNAc...) asparagine glycosylation is present at asparagine 21. A helical membrane pass occupies residues 46–66 (VLVLIFAVSLLGNVCALVLVA). The Cytoplasmic segment spans residues 67-77 (RRRRRGATACL). Residues 78–98 (VLNLFCADLLFISAIPLVLAV) form a helical membrane-spanning segment. Topologically, residues 99 to 112 (RWTEAWLLGPVACH) are extracellular. A disulfide bridge connects residues cysteine 111 and cysteine 194. A helical membrane pass occupies residues 113 to 133 (LLFYVMTLSGSVTILTLAAVS). The Cytoplasmic portion of the chain corresponds to 134-156 (LERMVCIVHLQRGVRGPGRRARA). The helical transmembrane segment at 157–177 (VLLALIWGYSAVAALPLCVFF) threads the bilayer. The Extracellular portion of the chain corresponds to 178 to 204 (RVVPQRLPGADQEISICTLIWPTIPGE). A helical membrane pass occupies residues 205-225 (ISWDVSFVTLNFLVPGLVIVI). The Cytoplasmic portion of the chain corresponds to 226–268 (SYSKILQITKASRKRLTVSLAYSESHQIRVSQQDFRLFRTLFL). Residues 269–289 (LMVSFFIMWSPIIITILLILI) traverse the membrane as a helical segment. Residues 290 to 295 (QNFKQD) lie on the Extracellular side of the membrane. A helical transmembrane segment spans residues 296–316 (LVIWPSLFFWVVAFTFANSAL). Over 317-361 (NPILYNMTLCRNEWKKIFCCFWFPEKGAILTDTSVKRNDLSIISG) the chain is Cytoplasmic. 2 positions are modified to phosphothreonine: threonine 347 and threonine 349. Phosphoserine is present on residues serine 350, serine 357, and serine 360.

Belongs to the G-protein coupled receptor 1 family. Interacts (via C-terminus) with ARRB2 following LCFAs stimulation. In terms of processing, phosphorylated at two clusters of Ser and Thr residues located in the intracellular C-terminus, a prerequisite for FFAR4 internalization via an ARRB2-dependent pathway. In terms of tissue distribution, the predominant isoform in human tissues. Expressed in adipose tissue, pancreatic islets, lung and brain. Expressed in alpha cells of pancreatic islets. Expressed in primary cilia of perivascular preadipocytes of white adipose tissue (at protein level). As to expression, abundant expression in the intestinal tract. Expressed in colonic intraepithelial neuroendocrine cells.

The protein localises to the cell membrane. The protein resides in the endosome membrane. It localises to the lysosome membrane. Its subcellular location is the cell projection. It is found in the cilium membrane. G-protein-coupled receptor for long-chain fatty acids (LCFAs) with a major role in adipogenesis, energy metabolism and inflammation. Signals via G-protein and beta-arrestin pathways. LCFAs sensing initiates activation of phosphoinositidase C-linked G proteins GNAQ and GNA11 (G(q)/G(11)), inducing a variety of cellular responses via second messenger pathways such as intracellular calcium mobilization, modulation of cyclic adenosine monophosphate (cAMP) production, and mitogen-activated protein kinases (MAPKs). After LCFAs binding, associates with beta-arrestin ARRB2 that acts as an adapter protein coupling the receptor to specific downstream signaling pathways, as well as mediating receptor endocytosis. In response to dietary fats, plays an important role in the regulation of adipocyte proliferation and differentiation. Acts as a receptor for omega-3 polyunsaturated fatty acids (PUFAs) at primary cilium of perivascular preadipocytes, initiating an adipogenic program via cAMP and CTCF-dependent chromatin remodeling that ultimately results in transcriptional activation of adipogenic genes and cell cycle entry. Induces differentiation of brown adipocytes probably via autocrine and endocrine functions of FGF21 hormone. Activates brown adipocytes by initiating intracellular calcium signaling that leads to mitochondrial depolarization and fission, and overall increased mitochondrial respiration. Consequently stimulates fatty acid uptake and oxidation in mitochondria together with UCP1-mediated thermogenic respiration, eventually reducing fat mass. Regulates bi-potential differentiation of bone marrow mesenchymal stem cells toward osteoblasts or adipocytes likely by up-regulating distinct integrins. In response to dietary fats regulates hormone secretion and appetite. Stimulates GIP and GLP1 secretion from enteroendocrine cells as well as GCG secretion in pancreatic alpha cells, thereby playing a role in the regulation of blood glucose levels. Negatively regulates glucose-induced SST secretion in pancreatic delta cells. Mediates LCFAs inhibition of GHRL secretion, an appetite-controlling hormone. In taste buds, contributes to sensing of dietary fatty acids by the gustatory system. During the inflammatory response, promotes anti-inflammatory M2 macrophage differentiation in adipose tissue. Mediates the anti-inflammatory effects of omega-3 PUFAs via inhibition of NLRP3 inflammasome activation. In this pathway, interacts with adapter protein ARRB2 and inhibits the priming step triggered by Toll-like receptors (TLRs) at the level of TAK1 and TAB1. Further inhibits the activation step when ARRB2 directly associates with NLRP3, leading to inhibition of pro-inflammatory cytokine release. Mediates LCFAs anti-apoptotic effects. In terms of biological role, receptor for LCFAs decoupled from G-protein signaling. May signal through beta-arrestin pathway. After LCFAs binding, associates with beta-arrestin ARRB2 that may act as an adapter protein coupling the receptor to specific downstream signaling pathways, as well as mediating receptor endocytosis. This Homo sapiens (Human) protein is Free fatty acid receptor 4.